The following is a 202-amino-acid chain: dITP/XTP pyrophosphatase (202 aa).

Position 7–12 (7–12 (SRNEAK)) interacts with substrate. Asp-68 functions as the Proton acceptor in the catalytic mechanism. Residue Asp-68 coordinates Mg(2+). Substrate contacts are provided by residues Ser-69, 156–159 (FGYD), Lys-179, and 184–185 (HR).

Belongs to the HAM1 NTPase family. In terms of assembly, homodimer. Mg(2+) is required as a cofactor.

The catalysed reaction is XTP + H2O = XMP + diphosphate + H(+). The enzyme catalyses dITP + H2O = dIMP + diphosphate + H(+). It catalyses the reaction ITP + H2O = IMP + diphosphate + H(+). In terms of biological role, pyrophosphatase that catalyzes the hydrolysis of nucleoside triphosphates to their monophosphate derivatives, with a high preference for the non-canonical purine nucleotides XTP (xanthosine triphosphate), dITP (deoxyinosine triphosphate) and ITP. Seems to function as a house-cleaning enzyme that removes non-canonical purine nucleotides from the nucleotide pool, thus preventing their incorporation into DNA/RNA and avoiding chromosomal lesions. The protein is dITP/XTP pyrophosphatase of Frankia alni (strain DSM 45986 / CECT 9034 / ACN14a).